The following is a 226-amino-acid chain: Small ribosomal subunit protein uS5 (226 aa).

Residues 1-18 (MAAPQRSRTTGAPSSGGP) are compositionally biased toward polar residues. The disordered stretch occupies residues 1–45 (MAAPQRSRTTGAPSSGGPSENERGRGGDRRGGDRRGGDRRGGDDR). Positions 20–45 (ENERGRGGDRRGGDRRGGDRRGGDDR) are enriched in basic and acidic residues. An S5 DRBM domain is found at 48-111 (FVERVVTINR…EEAKKNFFRV (64 aa)).

The protein belongs to the universal ribosomal protein uS5 family. In terms of assembly, part of the 30S ribosomal subunit. Contacts proteins S4 and S8.

With S4 and S12 plays an important role in translational accuracy. Functionally, located at the back of the 30S subunit body where it stabilizes the conformation of the head with respect to the body. This Beutenbergia cavernae (strain ATCC BAA-8 / DSM 12333 / CCUG 43141 / JCM 11478 / NBRC 16432 / NCIMB 13614 / HKI 0122) protein is Small ribosomal subunit protein uS5.